The chain runs to 422 residues: Serine--tRNA ligase (422 aa).

229–231 is an L-serine binding site; that stretch reads TAE. ATP is bound at residue 258–260; the sequence is RRE. Residue glutamate 281 coordinates L-serine. 345-348 lines the ATP pocket; sequence EISS. Serine 379 provides a ligand contact to L-serine.

This sequence belongs to the class-II aminoacyl-tRNA synthetase family. Type-1 seryl-tRNA synthetase subfamily. As to quaternary structure, homodimer. The tRNA molecule binds across the dimer.

It is found in the cytoplasm. The enzyme catalyses tRNA(Ser) + L-serine + ATP = L-seryl-tRNA(Ser) + AMP + diphosphate + H(+). The catalysed reaction is tRNA(Sec) + L-serine + ATP = L-seryl-tRNA(Sec) + AMP + diphosphate + H(+). It participates in aminoacyl-tRNA biosynthesis; selenocysteinyl-tRNA(Sec) biosynthesis; L-seryl-tRNA(Sec) from L-serine and tRNA(Sec): step 1/1. Its function is as follows. Catalyzes the attachment of serine to tRNA(Ser). Is also able to aminoacylate tRNA(Sec) with serine, to form the misacylated tRNA L-seryl-tRNA(Sec), which will be further converted into selenocysteinyl-tRNA(Sec). This chain is Serine--tRNA ligase, found in Methanosarcina mazei (strain ATCC BAA-159 / DSM 3647 / Goe1 / Go1 / JCM 11833 / OCM 88) (Methanosarcina frisia).